Consider the following 181-residue polypeptide: Probable pyruvoyl-dependent arginine decarboxylase (181 aa).

Ser43 is subject to Pyruvic acid (Ser).

This sequence belongs to the PdaD family. Pyruvate is required as a cofactor.

The catalysed reaction is L-arginine + H(+) = agmatine + CO2. The sequence is that of Probable pyruvoyl-dependent arginine decarboxylase from Chlorobium limicola (strain DSM 245 / NBRC 103803 / 6330).